A 295-amino-acid chain; its full sequence is uncharacterized protein (295 aa).

The ABC transporter domain occupies 2–226; it reads LSIESLCKSY…QQTNVFTLSV (225 aa). 34–41 contacts ATP; that stretch reads GPNGAGKT.

The protein belongs to the ABC transporter superfamily.

This is an uncharacterized protein from Bacillus subtilis (strain 168).